Here is a 720-residue protein sequence, read N- to C-terminus: Glycine--tRNA ligase beta subunit (720 aa).

It belongs to the class-II aminoacyl-tRNA synthetase family. Tetramer of two alpha and two beta subunits.

Its subcellular location is the cytoplasm. It catalyses the reaction tRNA(Gly) + glycine + ATP = glycyl-tRNA(Gly) + AMP + diphosphate. This Acidovorax ebreus (strain TPSY) (Diaphorobacter sp. (strain TPSY)) protein is Glycine--tRNA ligase beta subunit.